The sequence spans 1038 residues: Importin-7 (1038 aa).

M1 is subject to N-acetylmethionine. The region spanning 22–101 (AERQLNEAHK…RENIVEAIIH (80 aa)) is the Importin N-terminal domain. The interval 881–910 (EHENDSDDDEDAEDDDETEELGSDEDDIDE) is disordered. Over residues 884 to 910 (NDSDDDEDAEDDDETEELGSDEDDIDE) the composition is skewed to acidic residues. S886 is modified (phosphoserine). A Phosphothreonine modification is found at T898. Residues S903 and S1020 each carry the phosphoserine modification.

This sequence belongs to the importin beta family. As to quaternary structure, forms a heterodimer with KPNB1. Interacts with histone H1. Interacts with H2A, H2B, H3 and H4 histones. Interacts with SNUPN and XPO1. Interacts with RPS7 and RPL5. Interacts with RPL23A (via BIB domain). Binds directly to nuclear pore complexes. Interacts with SMAD4 and NUP93; translocates SMAD4 to the nucleus through the NPC upon BMP7 stimulation resulting in activation of SMAD4 signaling. Interacts with phosphorylated SMAD2; the interaction facilitates translocation of SMAD2 to the nucleus. Interacts with SRP19. Interacts with RUNX2; the interaction inhibits RUNX2 nuclear translocation in osteoblasts. Interacts with HDAC6, DLX3 and KLF4; the interaction facilitates HDAC6, DLX3 and KLF4 nuclear translocation in dental papilla cells.

The protein resides in the cytoplasm. Its subcellular location is the nucleus. Functions in nuclear protein import, either by acting as autonomous nuclear transport receptor or as an adapter-like protein in association with the importin-beta subunit KPNB1. Acting autonomously is thought to serve itself as receptor for nuclear localization signals (NLS) and to promote translocation of import substrates through the nuclear pore complex (NPC) by an energy requiring, Ran-dependent mechanism. At the nucleoplasmic side of the NPC, Ran binds to importin, the importin/substrate complex dissociates and importin is re-exported from the nucleus to the cytoplasm where GTP hydrolysis releases Ran. Mediates autonomously the nuclear import of ribosomal proteins RPL23A, RPS7 and RPL5. In association with KPNB1 mediates the nuclear import of H1 histone and the Ran-binding site of IPO7 is not required but synergizes with that of KPNB1 in importin/substrate complex dissociation. Promotes odontoblast differentiation via promoting nuclear translocation of DLX3, KLF4, SMAD2, thereby facilitating the transcription of target genes that play a role in odontoblast differentiation. Facilitates BMP4-induced translocation of SMAD1 to the nucleus and recruitment to the MSX1 gene promoter, thereby promotes the expression of the odontogenic regulator MSX1 in dental mesenchymal cells. Also promotes odontoblast differentiation by facilitating the nuclear translocation of HDAC6 and subsequent repression of RUNX2 expression. Inhibits osteoblast differentiation by inhibiting nuclear translocation of RUNX2 and therefore inhibition of RUNX2 target gene transcription. In vitro, mediates nuclear import of H2A, H2B, H3 and H4 histones. In Mus musculus (Mouse), this protein is Importin-7 (Ipo7).